The primary structure comprises 620 residues: 1-deoxy-D-xylulose-5-phosphate synthase (620 aa).

Residues histidine 75 and 116–118 (AHS) each bind thiamine diphosphate. Aspartate 147 contacts Mg(2+). Residues 148-149 (GA), asparagine 177, tyrosine 284, and glutamate 366 contribute to the thiamine diphosphate site. Asparagine 177 is a Mg(2+) binding site.

This sequence belongs to the transketolase family. DXPS subfamily. Homodimer. The cofactor is Mg(2+). It depends on thiamine diphosphate as a cofactor.

It carries out the reaction D-glyceraldehyde 3-phosphate + pyruvate + H(+) = 1-deoxy-D-xylulose 5-phosphate + CO2. It functions in the pathway metabolic intermediate biosynthesis; 1-deoxy-D-xylulose 5-phosphate biosynthesis; 1-deoxy-D-xylulose 5-phosphate from D-glyceraldehyde 3-phosphate and pyruvate: step 1/1. Catalyzes the acyloin condensation reaction between C atoms 2 and 3 of pyruvate and glyceraldehyde 3-phosphate to yield 1-deoxy-D-xylulose-5-phosphate (DXP). The protein is 1-deoxy-D-xylulose-5-phosphate synthase of Bordetella pertussis (strain Tohama I / ATCC BAA-589 / NCTC 13251).